Here is a 76-residue protein sequence, read N- to C-terminus: uncharacterized protein (76 aa).

A helical transmembrane segment spans residues 20–42 (GIVWGPKLAPWGITLGLGAFYFF).

It is found in the membrane. This is an uncharacterized protein from Dictyostelium discoideum (Social amoeba).